Here is a 368-residue protein sequence, read N- to C-terminus: Microtubule-associated protein Jupiter (368 aa).

The residue at position 30 (S30) is a Phosphoserine. T41 is modified (phosphothreonine). Over residues R81–L93 the composition is skewed to basic and acidic residues. The tract at residues R81–N106 is disordered. T102 is subject to Phosphothreonine. A phosphoserine mark is found at S111, S146, and S157. Low complexity-rich tracts occupy residues N129–S157 and G238–R248. 3 disordered regions span residues N129 to N164, S196 to N256, and K316 to W368. A compositionally biased stretch (polar residues) spans G337–N354.

This sequence belongs to the MAP Jupiter family.

It is found in the nucleus. The protein resides in the cytoplasm. Its subcellular location is the cytoskeleton. It localises to the spindle. Binds to all microtubule populations. This Drosophila willistoni (Fruit fly) protein is Microtubule-associated protein Jupiter.